Consider the following 336-residue polypeptide: Acetyl-coenzyme A carboxylase carboxyl transferase subunit beta (336 aa).

One can recognise a CoA carboxyltransferase N-terminal domain in the interval 27-297; the sequence is LWTKCESCQG…VAPAPAPAAT (271 aa). Zn(2+)-binding residues include C31, C34, C50, and C53. The C4-type zinc finger occupies 31-53; sequence CESCQGILYRPDLERNLEVCPKC. The interval 287 to 336 is disordered; the sequence is SVAPAPAPAATVDPEPESAEPEAPAEEAGPAGAAGDQAGESQDEGDPRNA. Residues 300–311 show a composition bias toward acidic residues; sequence PEPESAEPEAPA. Low complexity predominate over residues 312–326; it reads EEAGPAGAAGDQAGE.

It belongs to the AccD/PCCB family. In terms of assembly, acetyl-CoA carboxylase is a heterohexamer composed of biotin carboxyl carrier protein (AccB), biotin carboxylase (AccC) and two subunits each of ACCase subunit alpha (AccA) and ACCase subunit beta (AccD). Zn(2+) serves as cofactor.

The protein localises to the cytoplasm. It carries out the reaction N(6)-carboxybiotinyl-L-lysyl-[protein] + acetyl-CoA = N(6)-biotinyl-L-lysyl-[protein] + malonyl-CoA. The protein operates within lipid metabolism; malonyl-CoA biosynthesis; malonyl-CoA from acetyl-CoA: step 1/1. Component of the acetyl coenzyme A carboxylase (ACC) complex. Biotin carboxylase (BC) catalyzes the carboxylation of biotin on its carrier protein (BCCP) and then the CO(2) group is transferred by the transcarboxylase to acetyl-CoA to form malonyl-CoA. In Halorhodospira halophila (strain DSM 244 / SL1) (Ectothiorhodospira halophila (strain DSM 244 / SL1)), this protein is Acetyl-coenzyme A carboxylase carboxyl transferase subunit beta.